The following is a 210-amino-acid chain: MNGLKTPPEIGIQLPEAKVAAETGTMSGPLVPPRSDRSVRRGTDVAHVVLRFVCLLTSVIALSLMATAKEAASISIYGFLLPVSSKWSFSDSFEYLVGVSAAVAAHALLQLIISVSRLLRKSPVIPSRNHAWLIFAGDQAFAYAMLSAGSAASGVTNLNRTGIRHSPLPNFCKPLRSFCDHVAASIAFTFFSCFLLATSAILDVIWLSKY.

Residues 1–44 are Cytoplasmic-facing; the sequence is MNGLKTPPEIGIQLPEAKVAAETGTMSGPLVPPRSDRSVRRGTD. The chain crosses the membrane as a helical span at residues 45-65; it reads VAHVVLRFVCLLTSVIALSLM. Residues 66–94 are Extracellular-facing; that stretch reads ATAKEAASISIYGFLLPVSSKWSFSDSFE. Residues 95–115 traverse the membrane as a helical segment; sequence YLVGVSAAVAAHALLQLIISV. At 116-130 the chain is on the cytoplasmic side; it reads SRLLRKSPVIPSRNH. A helical transmembrane segment spans residues 131-151; it reads AWLIFAGDQAFAYAMLSAGSA. Residues 152–185 lie on the Extracellular side of the membrane; sequence ASGVTNLNRTGIRHSPLPNFCKPLRSFCDHVAAS. N159 carries an N-linked (GlcNAc...) asparagine glycan. The chain crosses the membrane as a helical span at residues 186–206; it reads IAFTFFSCFLLATSAILDVIW. The Cytoplasmic segment spans residues 207 to 210; the sequence is LSKY.

Belongs to the Casparian strip membrane proteins (CASP) family. As to quaternary structure, homodimer and heterodimers.

It is found in the cell membrane. This Vitis vinifera (Grape) protein is CASP-like protein 3A1.